The primary structure comprises 394 residues: GDNF family receptor alpha-like (394 aa).

The N-terminal stretch at 1-18 is a signal peptide; the sequence is MIVFIFLAMGLSLENEYT. Topologically, residues 19-351 are extracellular; the sequence is SQTNNCTYLR…TGFHSPFNGE (333 aa). N-linked (GlcNAc...) asparagine glycosylation is found at asparagine 23, asparagine 50, asparagine 62, asparagine 67, asparagine 103, and asparagine 116. 11 disulfides stabilise this stretch: cysteine 131–cysteine 189, cysteine 138–cysteine 144, cysteine 155–cysteine 167, cysteine 162–cysteine 210, cysteine 191–cysteine 198, cysteine 220–cysteine 291, cysteine 227–cysteine 233, cysteine 244–cysteine 275, cysteine 252–cysteine 258, cysteine 269–cysteine 316, and cysteine 293–cysteine 304. Positions 149 to 228 are required for interaction with GDF15; it reads ASYLKACSAN…TCLSVIRSCQ (80 aa). The helical transmembrane segment at 352–371 threads the bilayer; sequence VIYAAMCMTVTCGILLLVMV. The Cytoplasmic portion of the chain corresponds to 372–394; that stretch reads KLRTSRISSKARDPSSIQIPGEL.

Belongs to the GDNFR family. In terms of assembly, interacts (via the extracellular domain) with GDF15 and RET; receptor of GDF15, mediates cellular signaling through interaction with RET after GDF15-binding. Interaction with RET requires previous GDF15-binding. Post-translationally, cleaved and inactivated by MMP14, inhibiting the GDF15-GFRAL aversive response. As to expression, expressed in the brainstem, restricted to cells in the area postrema and the immediately adjacent region of the nucleus tractus solitarius (at protein level). Detected at low levels in testis and adipose tissue.

The protein resides in the cell membrane. With respect to regulation, specifically inhibited by 3P10 monoclonal antibody. Strongly activated by LY3463251, a long-acting and stable agonist composed of GDF15 conjugated monomeric human IgG4 Fc. Its function is as follows. Brainstem-restricted receptor for GDF15 hormone, which triggers an aversive response, characterized by nausea, vomiting, and/or loss of appetite in response to various stresses. The aversive response is both required to reduce continuing exposure to those stresses at the time of exposure and to promote avoidance behavior in the future. The GDF15-GFRAL aversive response is triggered by stresses, such as anticancer drugs (camptothecin or cisplatin), cancers or drugs such as metformin. Upon interaction with its ligand, GDF15, mediates the GDF15-induced autophosphorylation and activation of the RET tyrosine kinase receptor, leading to activation of MAPK- and AKT- signaling pathways. Ligand-binding activates GFRAL-expressing neurons localized in the area postrema and nucleus tractus solitarius of the brainstem. The GDF15-GFRAL signal induces expression of genes involved in metabolism, such as lipid metabolism in adipose tissues. This is GDNF family receptor alpha-like from Homo sapiens (Human).